The sequence spans 81 residues: Large ribosomal subunit protein bL31B (81 aa).

It belongs to the bacterial ribosomal protein bL31 family. Type B subfamily. Part of the 50S ribosomal subunit.

This Bacillus cereus (strain ATCC 10987 / NRS 248) protein is Large ribosomal subunit protein bL31B.